The chain runs to 201 residues: Recombination protein RecR (201 aa).

Residues 57–72 (CADCRTFTEQEVCNIC) form a C4-type zinc finger. The 96-residue stretch at 81–176 (GQICVVESPA…EASRIAHGVP (96 aa)) folds into the Toprim domain.

This sequence belongs to the RecR family.

Its function is as follows. May play a role in DNA repair. It seems to be involved in an RecBC-independent recombinational process of DNA repair. It may act with RecF and RecO. This Shigella boydii serotype 4 (strain Sb227) protein is Recombination protein RecR.